We begin with the raw amino-acid sequence, 321 residues long: Nacrein-like protein (321 aa).

One can recognise an Alpha-carbonic anhydrase domain in the interval Arg-1–His-319. His-58 serves as the catalytic Proton acceptor.

It belongs to the alpha-carbonic anhydrase family. Component of the organic matrix of calcified shell layers like nacre and prisms.

It localises to the secreted. The polypeptide is Nacrein-like protein (Mytilus californianus (California mussel)).